A 220-amino-acid chain; its full sequence is NADH-quinone oxidoreductase subunit I (220 aa).

2 4Fe-4S ferredoxin-type domains span residues Leu-71–His-102 and Asp-112–Arg-141. Cys-82, Cys-85, Cys-88, Cys-92, Cys-121, Cys-124, Cys-127, and Cys-131 together coordinate [4Fe-4S] cluster. Residues Met-187–Val-220 are disordered.

It belongs to the complex I 23 kDa subunit family. In terms of assembly, NDH-1 is composed of 14 different subunits. Subunits NuoA, H, J, K, L, M, N constitute the membrane sector of the complex. [4Fe-4S] cluster serves as cofactor.

The protein resides in the cell inner membrane. The enzyme catalyses a quinone + NADH + 5 H(+)(in) = a quinol + NAD(+) + 4 H(+)(out). NDH-1 shuttles electrons from NADH, via FMN and iron-sulfur (Fe-S) centers, to quinones in the respiratory chain. The immediate electron acceptor for the enzyme in this species is believed to be ubiquinone. Couples the redox reaction to proton translocation (for every two electrons transferred, four hydrogen ions are translocated across the cytoplasmic membrane), and thus conserves the redox energy in a proton gradient. This chain is NADH-quinone oxidoreductase subunit I, found in Helicobacter pylori (strain ATCC 700392 / 26695) (Campylobacter pylori).